A 126-amino-acid polypeptide reads, in one-letter code: MRILFLIAFMYGCVHSYVNAVETKCPNLAIVTSSGEFHCSGCVERMPGFSYMYWLANDMKSDEDTKFIEHLGGGIKEDETVRTTDGGITTLRKVLHVTDTNKFAHYRFTCVLITLDGVSKKNIWLK.

Positions 1 to 16 are cleaved as a signal peptide; that stretch reads MRILFLIAFMYGCVHS.

Belongs to the orthopoxvirus OPG022 family.

It localises to the secreted. Soluble IL18-binding protein that may modulate the host antiviral response. This is Interleukin-18-binding protein (OPG022) from Cynomys gunnisoni (Gunnison's prairie dog).